We begin with the raw amino-acid sequence, 274 residues long: Syntaxin-12 (274 aa).

The disordered stretch occupies residues 1 to 20; it reads MSYGPLDMYRNPGPSGPQPR. S2 is modified (N-acetylserine). At 2–250 the chain is on the cytoplasmic side; the sequence is SYGPLDMYRN…AYYQKKSRKK (249 aa). Positions 34–80 form a coiled coil; the sequence is QRISQATAQIKNLMSQLGTKQDSSKLQENLQQFQHSTNQLAKETNEL. The disordered stretch occupies residues 128–150; it reads EKESIARARAGSRLSAEDRQREE. 4 positions are modified to phosphoserine: S139, S142, S218, and S225. Residues 178 to 240 form the t-SNARE coiled-coil homology domain; the sequence is LELIKERETA…ERASDQLQRA (63 aa). Residues 251–271 traverse the membrane as a helical; Anchor for type IV membrane protein segment; it reads MCILVLVLSVIVTVLVVVIWV. The Vesicular portion of the chain corresponds to 272-274; that stretch reads ASK.

It belongs to the syntaxin family. As to quaternary structure, associates with the BLOC-1 complex. Interacts with BLOC1S6. Interacts with NAPA and SNAP23. Identified in a complex containing STX6, STX12, VAMP4 and VTI1A. Interacts with GRIPAP1. Forms a complex with GRIP1, GRIA2 and NSG1; controls the intracellular fate of AMPAR and the endosomal sorting of the GRIA2 subunit toward recycling and membrane targeting. Interacts with NSG1. Interacts with TPC1. Interacts (via N-terminus) with VPS13B. In terms of tissue distribution, ubiquitous. Highly expressed in brain.

The protein localises to the endosome membrane. It localises to the golgi apparatus membrane. It is found in the endomembrane system. The protein resides in the early endosome membrane. Its subcellular location is the recycling endosome membrane. Functionally, SNARE promoting fusion of transport vesicles with target membranes. Together with SNARE STX6, promotes movement of vesicles from endosomes to the cell membrane, and may therefore function in the endocytic recycling pathway. Through complex formation with GRIP1, GRIA2 and NSG1 controls the intracellular fate of AMPAR and the endosomal sorting of the GRIA2 subunit toward recycling and membrane targeting. The sequence is that of Syntaxin-12 (Stx12) from Rattus norvegicus (Rat).